The chain runs to 94 residues: PqqA binding protein (94 aa).

It belongs to the PqqD family. Monomer. Interacts with PqqE.

The protein operates within cofactor biosynthesis; pyrroloquinoline quinone biosynthesis. In terms of biological role, functions as a PqqA binding protein and presents PqqA to PqqE, in the pyrroloquinoline quinone (PQQ) biosynthetic pathway. This is PqqA binding protein from Acinetobacter baumannii (strain SDF).